Here is a 177-residue protein sequence, read N- to C-terminus: Large ribosomal subunit protein uL6 (177 aa).

Belongs to the universal ribosomal protein uL6 family. Part of the 50S ribosomal subunit.

In terms of biological role, this protein binds to the 23S rRNA, and is important in its secondary structure. It is located near the subunit interface in the base of the L7/L12 stalk, and near the tRNA binding site of the peptidyltransferase center. The sequence is that of Large ribosomal subunit protein uL6 from Rickettsia felis (strain ATCC VR-1525 / URRWXCal2) (Rickettsia azadi).